A 563-amino-acid polypeptide reads, in one-letter code: BOS complex subunit NCLN (563 aa).

An N-terminal signal peptide occupies residues 1–42 (MLEEAGEVLENVLKASCLPLGFIVFLPAVLLLVAPPLPAADA). Residues 43–522 (AHEFTVYRMQ…VMNAYRVKPA (480 aa)) are Lumenal-facing. Asn-241 and Asn-428 each carry an N-linked (GlcNAc...) asparagine glycan. Residues 523 to 543 (IFDLLLALCIGAYLGMAYTAV) form a helical membrane-spanning segment. Residues 544–563 (QHFHVLYKTVQRLLLKAKAQ) are Cytoplasmic-facing.

It belongs to the nicastrin family. As to quaternary structure, component of the back of Sec61 (BOS) complex, composed of NCLN/Nicalin, NOMO1 and TMEM147. The BOS complex is part of the multi-pass translocon (MPT) complex, composed of three subcomplexes, the GEL complex (composed of RAB5IF/OPTI and TMCO1), the BOS complex (composed of NCLN/Nicalin, NOMO1 and TMEM147) and the PAT complex (composed of WDR83OS/Asterix and CCDC47). The MPT complex associates with the SEC61 complex.

It localises to the endoplasmic reticulum membrane. Functionally, component of the multi-pass translocon (MPT) complex that mediates insertion of multi-pass membrane proteins into the lipid bilayer of membranes. The MPT complex takes over after the SEC61 complex: following membrane insertion of the first few transmembrane segments of proteins by the SEC61 complex, the MPT complex occludes the lateral gate of the SEC61 complex to promote insertion of subsequent transmembrane regions. May antagonize Nodal signaling and subsequent organization of axial structures during mesodermal patterning, via its interaction with NOMO. The polypeptide is BOS complex subunit NCLN (Ncln) (Rattus norvegicus (Rat)).